A 328-amino-acid chain; its full sequence is Ketol-acid reductoisomerase (NADP(+)) (328 aa).

Positions 1–181 (MKIYYENDID…GLARAGVLET (181 aa)) constitute a KARI N-terminal Rossmann domain. NADP(+) contacts are provided by residues 24 to 27 (YGSQ), Arg47, Ser52, and 82 to 85 (DEIQ). Residue His107 is part of the active site. Gly133 contacts NADP(+). A KARI C-terminal knotted domain is found at 182 to 327 (TFREETETDL…SKLRKLCGLE (146 aa)). Residues Asp190, Glu194, Glu226, and Glu230 each contribute to the Mg(2+) site. Substrate is bound at residue Ser251.

It belongs to the ketol-acid reductoisomerase family. Mg(2+) is required as a cofactor.

The catalysed reaction is (2R)-2,3-dihydroxy-3-methylbutanoate + NADP(+) = (2S)-2-acetolactate + NADPH + H(+). It carries out the reaction (2R,3R)-2,3-dihydroxy-3-methylpentanoate + NADP(+) = (S)-2-ethyl-2-hydroxy-3-oxobutanoate + NADPH + H(+). It participates in amino-acid biosynthesis; L-isoleucine biosynthesis; L-isoleucine from 2-oxobutanoate: step 2/4. It functions in the pathway amino-acid biosynthesis; L-valine biosynthesis; L-valine from pyruvate: step 2/4. Involved in the biosynthesis of branched-chain amino acids (BCAA). Catalyzes an alkyl-migration followed by a ketol-acid reduction of (S)-2-acetolactate (S2AL) to yield (R)-2,3-dihydroxy-isovalerate. In the isomerase reaction, S2AL is rearranged via a Mg-dependent methyl migration to produce 3-hydroxy-3-methyl-2-ketobutyrate (HMKB). In the reductase reaction, this 2-ketoacid undergoes a metal-dependent reduction by NADPH to yield (R)-2,3-dihydroxy-isovalerate. The chain is Ketol-acid reductoisomerase (NADP(+)) from Methanothermobacter thermautotrophicus (strain ATCC 29096 / DSM 1053 / JCM 10044 / NBRC 100330 / Delta H) (Methanobacterium thermoautotrophicum).